Reading from the N-terminus, the 199-residue chain is Ribonuclease P protein subunit p25 (199 aa).

Residues 1 to 11 (MENFRKVRSEE) are compositionally biased toward basic and acidic residues. Disordered stretches follow at residues 1 to 31 (MENF…FADL) and 146 to 199 (PRQL…DRTA). Position 172 is a phosphoserine (S172). Residues 190–199 (PEAENEDRTA) show a composition bias toward acidic residues.

The protein belongs to the histone-like Alba family. As to quaternary structure, component of nuclear RNase P and RNase MRP ribonucleoproteins. RNase P consists of a catalytic RNA moiety and 10 different protein chains; POP1, POP4, POP5, POP7, RPP14, RPP21, RPP25, RPP30, RPP38 and RPP40. Within the RNase P complex, POP1, POP7 and RPP25 form the 'finger' subcomplex, POP5, RPP14, RPP40 and homodimeric RPP30 form the 'palm' subcomplex, and RPP21, POP4 and RPP38 form the 'wrist' subcomplex. All subunits of the RNase P complex interact with the catalytic RNA. Several subunits of RNase P are also part of the RNase MRP complex. RNase MRP consists of a catalytic RNA moiety and about 8 protein subunits; POP1, POP7, RPP25, RPP30, RPP38, RPP40 and possibly also POP4 and POP5. POP7 forms a heterodimer with RPP25 that binds to the P3 stem loop of the catalytic RNA.

It localises to the nucleus. The protein localises to the nucleolus. In terms of biological role, component of ribonuclease P, a ribonucleoprotein complex that generates mature tRNA molecules by cleaving their 5'-ends. Also a component of the MRP ribonuclease complex, which cleaves pre-rRNA sequences. The sequence is that of Ribonuclease P protein subunit p25 (Rpp25) from Rattus norvegicus (Rat).